A 389-amino-acid polypeptide reads, in one-letter code: Chalcone synthase 1 (389 aa).

Residue Cys-164 is part of the active site.

Belongs to the thiolase-like superfamily. Chalcone/stilbene synthases family.

It carries out the reaction (E)-4-coumaroyl-CoA + 3 malonyl-CoA + 3 H(+) = 2',4,4',6'-tetrahydroxychalcone + 3 CO2 + 4 CoA. It functions in the pathway secondary metabolite biosynthesis; flavonoid biosynthesis. In terms of biological role, the primary product of this enzyme is 4,2',4',6'-tetrahydroxychalcone (also termed naringenin-chalcone or chalcone) which can under specific conditions spontaneously isomerize into naringenin. The protein is Chalcone synthase 1 (CHS1) of Trifolium subterraneum (Subterranean clover).